The primary structure comprises 392 residues: O-phospho-L-seryl-tRNA:Cys-tRNA synthase 1 (392 aa).

Residues 85 to 86, Asn190, and 213 to 215 each bind pyridoxal 5'-phosphate; these read AR and SGH. N6-(pyridoxal phosphate)lysine is present on Lys216.

This sequence belongs to the SepCysS family. As to quaternary structure, homodimer. Interacts with SepRS. Pyridoxal 5'-phosphate is required as a cofactor.

The catalysed reaction is O-phospho-L-seryl-tRNA(Cys) + hydrogen sulfide + H(+) = L-cysteinyl-tRNA(Cys) + phosphate. Its function is as follows. Converts O-phospho-L-seryl-tRNA(Cys) (Sep-tRNA(Cys)) to L-cysteinyl-tRNA(Cys) (Cys-tRNA(Cys)). The protein is O-phospho-L-seryl-tRNA:Cys-tRNA synthase 1 of Methanocorpusculum labreanum (strain ATCC 43576 / DSM 4855 / Z).